Here is a 172-residue protein sequence, read N- to C-terminus: Adrenodoxin homolog, mitochondrial (172 aa).

A mitochondrion-targeting transit peptide spans 1 to 16 (MLKIVTRAGHTARISN). Positions 61 to 163 (LKITFILKDG…GIRVALPQMT (103 aa)) constitute a 2Fe-2S ferredoxin-type domain. The [2Fe-2S] cluster site is built by Cys-98, Cys-104, Cys-107, and Cys-144.

This sequence belongs to the adrenodoxin/putidaredoxin family. As to quaternary structure, interacts in its reduced state with the apo form of ISU1. Requires [2Fe-2S] cluster as cofactor.

The protein localises to the mitochondrion matrix. Its function is as follows. Iron-sulfur protein that transfers electrons in a wide variety of metabolic reactions. Involved in heme A biosynthesis and in iron-sulfur cluster assembly. Transfers electrons from adrenodoxin reductase ARH1 to heme A synthase COX15, a heme protein that catalyzes the conversion of heme O to heme A. Required for the de novo synthesis of Fe-S clusters on iron sulfur cluster assembly protein ISU1. Interact in its reduced state with ISU1 to productively deliver electrons for Fe-S cluster synthesis. Essential for coenzyme Q biosynthesis. May transfer the electrons required for the hydroxylation reaction performed by COQ6. This chain is Adrenodoxin homolog, mitochondrial, found in Saccharomyces cerevisiae (strain ATCC 204508 / S288c) (Baker's yeast).